We begin with the raw amino-acid sequence, 166 residues long: NADH-quinone oxidoreductase subunit E (166 aa).

Residues C92, C97, C133, and C137 each contribute to the [2Fe-2S] cluster site.

Belongs to the complex I 24 kDa subunit family. As to quaternary structure, composed of 13 different subunits. Subunits NuoCD, E, F, and G constitute the peripheral sector of the complex. It depends on [2Fe-2S] cluster as a cofactor.

It catalyses the reaction a quinone + NADH + 5 H(+)(in) = a quinol + NAD(+) + 4 H(+)(out). Its function is as follows. NDH-1 shuttles electrons from NADH, via FMN and iron-sulfur (Fe-S) centers, to quinones in the respiratory chain. The immediate electron acceptor for the enzyme in this species is believed to be ubiquinone. Couples the redox reaction to proton translocation (for every two electrons transferred, four hydrogen ions are translocated across the cytoplasmic membrane), and thus conserves the redox energy in a proton gradient. The protein is NADH-quinone oxidoreductase subunit E (nuoE) of Pseudomonas aeruginosa (strain ATCC 15692 / DSM 22644 / CIP 104116 / JCM 14847 / LMG 12228 / 1C / PRS 101 / PAO1).